The following is a 525-amino-acid chain: EGF domain-specific O-linked N-acetylglucosamine transferase (525 aa).

A signal peptide spans 1–24 (MVPLRLVLLLHIIHFSCENEVGSA). Residues 293–295 (DYE) carry the Required for optimal activity motif. Asn-352 is a glycosylation site (N-linked (GlcNAc...) asparagine). A Prevents secretion from ER motif is present at residues 522 to 525 (RDEL).

It belongs to the glycosyltransferase 61 family.

The protein localises to the endoplasmic reticulum lumen. The catalysed reaction is L-seryl-[protein] + UDP-N-acetyl-alpha-D-glucosamine = 3-O-(N-acetyl-beta-D-glucosaminyl)-L-seryl-[protein] + UDP + H(+). The enzyme catalyses L-threonyl-[protein] + UDP-N-acetyl-alpha-D-glucosamine = 3-O-(N-acetyl-beta-D-glucosaminyl)-L-threonyl-[protein] + UDP + H(+). In terms of biological role, catalyzes the transfer of a single N-acetylglucosamine from UDP-GlcNAc to a serine or threonine residue in extracellular proteins resulting in their modification with a beta-linked N-acetylglucosamine (O-GlcNAc). Specifically glycosylates the Thr residue located between the fifth and sixth conserved cysteines of folded EGF-like domains. This is EGF domain-specific O-linked N-acetylglucosamine transferase (eogt) from Xenopus laevis (African clawed frog).